Here is a 228-residue protein sequence, read N- to C-terminus: Ribosomal RNA small subunit methyltransferase G (228 aa).

S-adenosyl-L-methionine-binding positions include glycine 70, 121 to 122, and arginine 138; that span reads AE.

The protein belongs to the methyltransferase superfamily. RNA methyltransferase RsmG family.

Its subcellular location is the cytoplasm. Specifically methylates the N7 position of a guanine in 16S rRNA. The chain is Ribosomal RNA small subunit methyltransferase G from Thermotoga sp. (strain RQ2).